We begin with the raw amino-acid sequence, 57 residues long: MAVPKRRTSKARKRKRRTHWKLKSPNLVECPQCHELKLSHRVCPSCGYYKGREVVSK.

It belongs to the bacterial ribosomal protein bL32 family.

The protein is Large ribosomal subunit protein bL32 of Halothermothrix orenii (strain H 168 / OCM 544 / DSM 9562).